Consider the following 383-residue polypeptide: Succinyl-diaminopimelate desuccinylase (383 aa).

Residue H73 coordinates Zn(2+). D75 is an active-site residue. D107 contacts Zn(2+). E141 functions as the Proton acceptor in the catalytic mechanism. Zn(2+) is bound by residues E142, E170, and H356.

It belongs to the peptidase M20A family. DapE subfamily. In terms of assembly, homodimer. Requires Zn(2+) as cofactor. It depends on Co(2+) as a cofactor.

The enzyme catalyses N-succinyl-(2S,6S)-2,6-diaminopimelate + H2O = (2S,6S)-2,6-diaminopimelate + succinate. It functions in the pathway amino-acid biosynthesis; L-lysine biosynthesis via DAP pathway; LL-2,6-diaminopimelate from (S)-tetrahydrodipicolinate (succinylase route): step 3/3. Functionally, catalyzes the hydrolysis of N-succinyl-L,L-diaminopimelic acid (SDAP), forming succinate and LL-2,6-diaminopimelate (DAP), an intermediate involved in the bacterial biosynthesis of lysine and meso-diaminopimelic acid, an essential component of bacterial cell walls. This Pseudomonas putida (strain GB-1) protein is Succinyl-diaminopimelate desuccinylase.